The chain runs to 293 residues: Bifunctional protein FolD (293 aa).

Residues 164–166 (GRS), S193, and T234 each bind NADP(+).

Belongs to the tetrahydrofolate dehydrogenase/cyclohydrolase family. As to quaternary structure, homodimer.

It carries out the reaction (6R)-5,10-methylene-5,6,7,8-tetrahydrofolate + NADP(+) = (6R)-5,10-methenyltetrahydrofolate + NADPH. The catalysed reaction is (6R)-5,10-methenyltetrahydrofolate + H2O = (6R)-10-formyltetrahydrofolate + H(+). It participates in one-carbon metabolism; tetrahydrofolate interconversion. Functionally, catalyzes the oxidation of 5,10-methylenetetrahydrofolate to 5,10-methenyltetrahydrofolate and then the hydrolysis of 5,10-methenyltetrahydrofolate to 10-formyltetrahydrofolate. The polypeptide is Bifunctional protein FolD (Phocaeicola vulgatus (strain ATCC 8482 / DSM 1447 / JCM 5826 / CCUG 4940 / NBRC 14291 / NCTC 11154) (Bacteroides vulgatus)).